The chain runs to 184 residues: Myosin regulatory light chain 1 (184 aa).

The interval 1–29 is disordered; sequence MFSSKENSLGAKRAPFSSNTTSSQRVAAQ. S36 is subject to Phosphoserine. EF-hand domains follow at residues 45–80 and 114–149; these read SQIQ…LNQD and SPRN…MGDR. D58, D60, D62, N64, and D69 together coordinate Ca(2+).

As to quaternary structure, binds to myosin II chains myo2 and myo3.

It is found in the cytoplasm. This is Myosin regulatory light chain 1 (rlc1) from Schizosaccharomyces pombe (strain 972 / ATCC 24843) (Fission yeast).